We begin with the raw amino-acid sequence, 484 residues long: uncharacterized protein (484 aa).

This is an uncharacterized protein from Orgyia pseudotsugata multicapsid polyhedrosis virus (OpMNPV).